The sequence spans 105 residues: DNA-directed RNA polymerase subunit omega (105 aa).

It belongs to the RNA polymerase subunit omega family. As to quaternary structure, the RNAP catalytic core consists of 2 alpha, 1 beta, 1 beta' and 1 omega subunit. When a sigma factor is associated with the core the holoenzyme is formed, which can initiate transcription.

It carries out the reaction RNA(n) + a ribonucleoside 5'-triphosphate = RNA(n+1) + diphosphate. Its function is as follows. Promotes RNA polymerase assembly. Latches the N- and C-terminal regions of the beta' subunit thereby facilitating its interaction with the beta and alpha subunits. The protein is DNA-directed RNA polymerase subunit omega of Streptococcus uberis (strain ATCC BAA-854 / 0140J).